We begin with the raw amino-acid sequence, 342 residues long: Holliday junction branch migration complex subunit RuvB (342 aa).

The segment at 1–185 is large ATPase domain (RuvB-L); it reads MTVKPLRDVT…FPIQERLEYY (185 aa). ATP-binding positions include L24, R25, G66, K69, T70, S71, 132 to 134, R175, Y185, and R222; that span reads EDY. T70 is a Mg(2+) binding site. The interval 186–256 is small ATPAse domain (RuvB-S); that stretch reads GPAELKEIAV…VVDRTLRRLE (71 aa). The head domain (RuvB-H) stretch occupies residues 259-342; sequence ARGLDAMDRR…RPGGKQGSLV (84 aa). DNA contacts are provided by R314 and R319.

This sequence belongs to the RuvB family. Homohexamer. Forms an RuvA(8)-RuvB(12)-Holliday junction (HJ) complex. HJ DNA is sandwiched between 2 RuvA tetramers; dsDNA enters through RuvA and exits via RuvB. An RuvB hexamer assembles on each DNA strand where it exits the tetramer. Each RuvB hexamer is contacted by two RuvA subunits (via domain III) on 2 adjacent RuvB subunits; this complex drives branch migration. In the full resolvosome a probable DNA-RuvA(4)-RuvB(12)-RuvC(2) complex forms which resolves the HJ.

It is found in the cytoplasm. It catalyses the reaction ATP + H2O = ADP + phosphate + H(+). In terms of biological role, the RuvA-RuvB-RuvC complex processes Holliday junction (HJ) DNA during genetic recombination and DNA repair, while the RuvA-RuvB complex plays an important role in the rescue of blocked DNA replication forks via replication fork reversal (RFR). RuvA specifically binds to HJ cruciform DNA, conferring on it an open structure. The RuvB hexamer acts as an ATP-dependent pump, pulling dsDNA into and through the RuvAB complex. RuvB forms 2 homohexamers on either side of HJ DNA bound by 1 or 2 RuvA tetramers; 4 subunits per hexamer contact DNA at a time. Coordinated motions by a converter formed by DNA-disengaged RuvB subunits stimulates ATP hydrolysis and nucleotide exchange. Immobilization of the converter enables RuvB to convert the ATP-contained energy into a lever motion, pulling 2 nucleotides of DNA out of the RuvA tetramer per ATP hydrolyzed, thus driving DNA branch migration. The RuvB motors rotate together with the DNA substrate, which together with the progressing nucleotide cycle form the mechanistic basis for DNA recombination by continuous HJ branch migration. Branch migration allows RuvC to scan DNA until it finds its consensus sequence, where it cleaves and resolves cruciform DNA. This Anaeromyxobacter sp. (strain K) protein is Holliday junction branch migration complex subunit RuvB.